The sequence spans 381 residues: Succinyl-diaminopimelate desuccinylase (381 aa).

Residue His76 coordinates Zn(2+). The active site involves Asp78. Residue Asp107 participates in Zn(2+) binding. Glu140 serves as the catalytic Proton acceptor. Zn(2+) contacts are provided by Glu141, Glu169, and His354.

It belongs to the peptidase M20A family. DapE subfamily. As to quaternary structure, homodimer. Zn(2+) is required as a cofactor. Co(2+) serves as cofactor.

It catalyses the reaction N-succinyl-(2S,6S)-2,6-diaminopimelate + H2O = (2S,6S)-2,6-diaminopimelate + succinate. It functions in the pathway amino-acid biosynthesis; L-lysine biosynthesis via DAP pathway; LL-2,6-diaminopimelate from (S)-tetrahydrodipicolinate (succinylase route): step 3/3. Its function is as follows. Catalyzes the hydrolysis of N-succinyl-L,L-diaminopimelic acid (SDAP), forming succinate and LL-2,6-diaminopimelate (DAP), an intermediate involved in the bacterial biosynthesis of lysine and meso-diaminopimelic acid, an essential component of bacterial cell walls. In Gluconobacter oxydans (strain 621H) (Gluconobacter suboxydans), this protein is Succinyl-diaminopimelate desuccinylase.